Here is a 197-residue protein sequence, read N- to C-terminus: MRCLRKRQTIYAYSSSLTVLYLTQGKDWYCNCGSSTFKYSTFRPLHVQYGISKSMLTNLSRGVTWEVCWSCTCLYSSSSLGPVRKGGGFIEVFISSCRRSYSSWLKRGNSATMDAHVFGSSSSLLYCELLFVLCSRCPFMVCISQRRKSSLKLNTTLPMFALNLICLLRSILYSWKTFVRGILTFSFDVELVGLKFV.

Residues 150 to 172 (SLKLNTTLPMFALNLICLLRSIL) traverse the membrane as a helical segment.

It localises to the membrane. This is an uncharacterized protein from Saccharomyces cerevisiae (strain ATCC 204508 / S288c) (Baker's yeast).